Here is a 662-residue protein sequence, read N- to C-terminus: Aprataxin-like protein (662 aa).

The 105-residue stretch at 4–108 (SSALIKDISK…ISKDFVSTSL (105 aa)) folds into the HIT domain. Residues 381 to 403 (LRCNQCEFVTNMLLDLKAHLYQH) form a C2H2-type zinc finger. Positions 482 to 662 (KNINGPSVNM…PAPPSNSKPS (181 aa)) are disordered. Over residues 490–500 (NMMNQNNPNNP) the composition is skewed to low complexity. 2 stretches are compositionally biased toward polar residues: residues 501-513 (FRNT…QSQK) and 560-569 (GHQQFPNASS). The segment covering 570 to 582 (VGGGQTGLPGQGQ) has biased composition (gly residues). A compositionally biased stretch (polar residues) spans 588 to 599 (WNSNKIFNQQNR). The segment covering 600–626 (QNTVQAQPQAQNQQTNQQQIQNSNKNQ) has biased composition (low complexity). Over residues 653 to 662 (PAPPSNSKPS) the composition is skewed to pro residues.

Its subcellular location is the nucleus. DNA-binding protein involved in single-strand DNA break repair, double-strand DNA break repair and base excision repair. Resolves abortive DNA ligation intermediates formed either at base excision sites, or when DNA ligases attempt to repair non-ligatable breaks induced by reactive oxygen species. Catalyzes the release of adenylate groups covalently linked to 5'-phosphate termini, resulting in the production of 5'-phosphate termini that can be efficiently rejoined. This Drosophila melanogaster (Fruit fly) protein is Aprataxin-like protein.